The primary structure comprises 279 residues: Protein K1 (279 aa).

The N-terminal stretch at 1-18 (MFLYVVCSLAVCFRGLLS) is a signal peptide. The Extracellular segment spans residues 19–220 (LSLQSSPNLC…TYLYIQEHLL (202 aa)). The chain crosses the membrane as a helical span at residues 221–241 (VFMTLVALIGTMCGILGTIIF). At 242-279 (AHCQKQRDSNKTVPQQLQDYYSLHDLCTEDYTQPVDWY) the chain is on the cytoplasmic side.

In terms of assembly, homooligomer.

It is found in the host membrane. Promotes host cell survival pathways and may contribute to pathogenesis by preventing infected cells from undergoing apoptosis. Acts in host B-cells by mimicking the activated B-cell receptor complex. The cytoplasmic tail of K1 can induce the phosphorylation of a number of different kinases, leading to the activation of survival signaling pathways. This chain is Protein K1 (K1), found in Human herpesvirus 8 type P (isolate GK18) (HHV-8).